Consider the following 357-residue polypeptide: Protein RecA (357 aa).

71 to 78 (GPESSGKT) lines the ATP pocket.

The protein belongs to the RecA family.

Its subcellular location is the cytoplasm. In terms of biological role, can catalyze the hydrolysis of ATP in the presence of single-stranded DNA, the ATP-dependent uptake of single-stranded DNA by duplex DNA, and the ATP-dependent hybridization of homologous single-stranded DNAs. It interacts with LexA causing its activation and leading to its autocatalytic cleavage. The chain is Protein RecA from Ehrlichia canis (strain Jake).